The sequence spans 2078 residues: Autophagy-related protein 2 homolog B (2078 aa).

The 96-residue stretch at 13–108 folds into the Chorein N-terminal domain; the sequence is ACRYLLQRYL…EMVFRPRPRP (96 aa). Ser-255 and Ser-379 each carry phosphoserine. Positions 473–495 are disordered; that stretch reads GSTFPSNLVHPTPLQKTSLPSRS. The segment covering 486-495 has biased composition (polar residues); sequence LQKTSLPSRS. Ser-497, Ser-840, Ser-886, Ser-899, and Ser-1008 each carry phosphoserine. The interval 868–888 is disordered; that stretch reads EEEENDGHYQEEEEGGAHSLK. Positions 873-888 are enriched in basic and acidic residues; sequence DGHYQEEEEGGAHSLK. Tyr-1012 carries the post-translational modification Phosphotyrosine. 2 positions are modified to phosphoserine: Ser-1016 and Ser-1018. A Phosphothreonine modification is found at Thr-1022. The tract at residues 1375-1405 is disordered; the sequence is ADMKPGAFQRRSKVDSSGRSSSRGPVLPEAD. Position 1526 is a phosphoserine (Ser-1526).

The protein belongs to the ATG2 family. Interacts with WDR45/WIPI4.

The protein localises to the preautophagosomal structure membrane. Its subcellular location is the lipid droplet. The protein resides in the endoplasmic reticulum membrane. The enzyme catalyses a 1,2-diacyl-sn-glycero-3-phospho-L-serine(in) = a 1,2-diacyl-sn-glycero-3-phospho-L-serine(out). It catalyses the reaction a 1,2-diacyl-sn-glycero-3-phosphoethanolamine(in) = a 1,2-diacyl-sn-glycero-3-phosphoethanolamine(out). Functionally, lipid transfer protein required for both autophagosome formation and regulation of lipid droplet morphology and dispersion. Tethers the edge of the isolation membrane (IM) to the endoplasmic reticulum (ER) and mediates direct lipid transfer from ER to IM for IM expansion. Binds to the ER exit site (ERES), which is the membrane source for autophagosome formation, and extracts phospholipids from the membrane source and transfers them to ATG9 (ATG9A or ATG9B) to the IM for membrane expansion. Lipid transfer activity is enhanced by WDR45/WIPI4, which promotes ATG2B-association with phosphatidylinositol 3-monophosphate (PI3P)-containing membranes. In Homo sapiens (Human), this protein is Autophagy-related protein 2 homolog B.